The primary structure comprises 87 residues: Small polypeptide DEVIL 11 (87 aa).

The segment covering 1–11 has biased composition (polar residues); sequence MASSSSLTRSG. The disordered stretch occupies residues 1–47; sequence MASSSSLTRSGSVHLDEKWKLSKKDGGASRITRSSSTSSSSFNGKKQ. The span at 14-27 shows a compositional bias: basic and acidic residues; that stretch reads HLDEKWKLSKKDGG. Positions 29 to 41 are enriched in low complexity; the sequence is SRITRSSSTSSSS. Residues 51-82 form a required for DVL/RTFL small polypeptide activity region; the sequence is AFTRKCARLVKEQRARFYIMRRCVIMLICWRD. Residues 64–80 form a helical membrane-spanning segment; the sequence is RARFYIMRRCVIMLICW. N-linked (GlcNAc...) asparagine glycosylation is present at asparagine 83.

It belongs to the DVL/RTFL small polypeptides family.

Its subcellular location is the cell membrane. Small polypeptide acting as a regulatory molecule which coordinates cellular responses required for differentiation, growth and development, probably by restricting polar cell proliferation in lateral organs and coordinating socket cell recruitment and differentiation at trichome sites. This is Small polypeptide DEVIL 11 from Arabidopsis thaliana (Mouse-ear cress).